We begin with the raw amino-acid sequence, 227 residues long: Orotate phosphoribosyltransferase (227 aa).

K26 is a 5-phospho-alpha-D-ribose 1-diphosphate binding site. 34–35 contributes to the orotate binding site; it reads FF. Residues 72–73, R98, K99, K102, H104, and 123–131 contribute to the 5-phospho-alpha-D-ribose 1-diphosphate site; these read YK and DDVVSAGLS. Orotate contacts are provided by S127 and R155.

It belongs to the purine/pyrimidine phosphoribosyltransferase family. PyrE subfamily. Homodimer. The cofactor is Mg(2+).

The enzyme catalyses orotidine 5'-phosphate + diphosphate = orotate + 5-phospho-alpha-D-ribose 1-diphosphate. The protein operates within pyrimidine metabolism; UMP biosynthesis via de novo pathway; UMP from orotate: step 1/2. Catalyzes the transfer of a ribosyl phosphate group from 5-phosphoribose 1-diphosphate to orotate, leading to the formation of orotidine monophosphate (OMP). This chain is Orotate phosphoribosyltransferase, found in Nitrosomonas europaea (strain ATCC 19718 / CIP 103999 / KCTC 2705 / NBRC 14298).